Reading from the N-terminus, the 467-residue chain is Heat shock factor protein 3 (467 aa).

Residues 16–121 (VPGFLAKLWA…LLENIKRKVS (106 aa)) mediate DNA binding. A hydrophobic repeat HR-A/B region spans residues 128–201 (LKVCAEDLHK…LSLMRGNYIV (74 aa)). Positions 364–389 (IQDFLNCIDASLEELQAMLSGKQYSF) are hydrophobic repeat HR-C. The segment at 427–449 (EDLGASERETAGSKGGQEGTESC) is disordered.

Belongs to the HSF family. Homotrimer. As to expression, expressed in most tissues. High levels are found in erythrocytes and low levels in liver.

The protein resides in the cytoplasm. It localises to the nucleus. Its function is as follows. DNA-binding protein that specifically binds heat shock promoter elements (HSE) and activates transcription. HSF3 binds DNA constitutively only when the C-terminal region is deleted. The protein is Heat shock factor protein 3 (HSF3) of Gallus gallus (Chicken).